The primary structure comprises 148 residues: uncharacterized protein (148 aa).

Positions 1 to 22 (MVQTVLNSVWLWRSVLLRLTFS) are cleaved as a signal peptide.

This is an uncharacterized protein from Saccharomyces cerevisiae (strain ATCC 204508 / S288c) (Baker's yeast).